A 495-amino-acid polypeptide reads, in one-letter code: Cytochrome P450 2B15 (495 aa).

Serine 129 is subject to Phosphoserine; by PKA. Cysteine 437 is a binding site for heme.

This sequence belongs to the cytochrome P450 family. Heme is required as a cofactor.

It localises to the endoplasmic reticulum membrane. The protein localises to the microsome membrane. The enzyme catalyses an organic molecule + reduced [NADPH--hemoprotein reductase] + O2 = an alcohol + oxidized [NADPH--hemoprotein reductase] + H2O + H(+). In terms of biological role, cytochromes P450 are a group of heme-thiolate monooxygenases. In liver microsomes, this enzyme is involved in an NADPH-dependent electron transport pathway. It oxidizes a variety of structurally unrelated compounds, including steroids, fatty acids, and xenobiotics. In Rattus norvegicus (Rat), this protein is Cytochrome P450 2B15 (Cyp2b15).